A 311-amino-acid polypeptide reads, in one-letter code: HPr kinase/phosphorylase (311 aa).

Catalysis depends on residues histidine 138 and lysine 159. 153–160 (GDSGIGKS) contacts ATP. Serine 160 provides a ligand contact to Mg(2+). Residue aspartate 177 is the Proton acceptor; for phosphorylation activity. Proton donor; for dephosphorylation activity of the active site. Residues 201-210 (IEIRGVGIID) are important for the catalytic mechanism of both phosphorylation and dephosphorylation. A Mg(2+)-binding site is contributed by glutamate 202. The active site involves arginine 243. An important for the catalytic mechanism of dephosphorylation region spans residues 264–269 (PVKTGR).

The protein belongs to the HPrK/P family. In terms of assembly, homohexamer. Mg(2+) is required as a cofactor.

The catalysed reaction is [HPr protein]-L-serine + ATP = [HPr protein]-O-phospho-L-serine + ADP + H(+). The enzyme catalyses [HPr protein]-O-phospho-L-serine + phosphate + H(+) = [HPr protein]-L-serine + diphosphate. In terms of biological role, catalyzes the ATP- as well as the pyrophosphate-dependent phosphorylation of a specific serine residue in HPr, a phosphocarrier protein of the phosphoenolpyruvate-dependent sugar phosphotransferase system (PTS). HprK/P also catalyzes the pyrophosphate-producing, inorganic phosphate-dependent dephosphorylation (phosphorolysis) of seryl-phosphorylated HPr (P-Ser-HPr). The two antagonistic activities of HprK/P are regulated by several intracellular metabolites, which change their concentration in response to the absence or presence of rapidly metabolisable carbon sources (glucose, fructose, etc.) in the growth medium. Therefore, by controlling the phosphorylation state of HPr, HPrK/P is a sensor enzyme that plays a major role in the regulation of carbon metabolism and sugar transport: it mediates carbon catabolite repression (CCR), and regulates PTS-catalyzed carbohydrate uptake and inducer exclusion. This Streptococcus pneumoniae serotype 2 (strain D39 / NCTC 7466) protein is HPr kinase/phosphorylase.